The chain runs to 185 residues: MHILGIDPGSRNCGYAIINYAPHVNSLKLIEAGIIKIKERDLQTQIMEFVEGIDLVIKNIHIDEVAIEDIFFAYNPQSVIKLAQFRGALSLKILQEIGNFSEYTPLQVKKAITGNGKADKTQVAFMVKRILGLKGEIKPLDITDAIAIAITHSQRIKTNDVHSTPNLQRAMPLKSLSANPSKGCI.

Catalysis depends on residues Asp-7, Glu-68, and Asp-141. The Mg(2+) site is built by Asp-7, Glu-68, and Asp-141.

Belongs to the RuvC family. In terms of assembly, homodimer which binds Holliday junction (HJ) DNA. The HJ becomes 2-fold symmetrical on binding to RuvC with unstacked arms; it has a different conformation from HJ DNA in complex with RuvA. In the full resolvosome a probable DNA-RuvA(4)-RuvB(12)-RuvC(2) complex forms which resolves the HJ. Requires Mg(2+) as cofactor.

Its subcellular location is the cytoplasm. The enzyme catalyses Endonucleolytic cleavage at a junction such as a reciprocal single-stranded crossover between two homologous DNA duplexes (Holliday junction).. Functionally, the RuvA-RuvB-RuvC complex processes Holliday junction (HJ) DNA during genetic recombination and DNA repair. Endonuclease that resolves HJ intermediates. Cleaves cruciform DNA by making single-stranded nicks across the HJ at symmetrical positions within the homologous arms, yielding a 5'-phosphate and a 3'-hydroxyl group; requires a central core of homology in the junction. The consensus cleavage sequence is 5'-(A/T)TT(C/G)-3'. Cleavage occurs on the 3'-side of the TT dinucleotide at the point of strand exchange. HJ branch migration catalyzed by RuvA-RuvB allows RuvC to scan DNA until it finds its consensus sequence, where it cleaves and resolves the cruciform DNA. The sequence is that of Crossover junction endodeoxyribonuclease RuvC from Helicobacter hepaticus (strain ATCC 51449 / 3B1).